The chain runs to 100 residues: Eukaryotic translation initiation factor 4E-binding protein 3 (100 aa).

The YXXXXLphi motif motif lies at 40-46 (YDRKFLL). Residues 81–100 (LKEQETEEEIPDDAQFEMDI) are disordered. Residues 85–100 (ETEEEIPDDAQFEMDI) are compositionally biased toward acidic residues. A TOS motif motif is present at residues 96–100 (FEMDI).

Belongs to the eIF4E-binding protein family. In terms of assembly, interacts with EIF4E. Interacts with RPA2 (in unphosphorylated form via N-terminus); the interaction enhances EIF4EBP3-mediated inhibition of EIF4E-mediated mRNA nuclear export. Phosphorylated. In terms of tissue distribution, expression is highest in skeletal muscle, heart, kidney, and pancreas, whereas there is very little expression in brain and thymus.

It localises to the cytoplasm. It is found in the nucleus. Its function is as follows. Repressor of translation initiation that regulates EIF4E activity by preventing its assembly into the eIF4F complex: the hypophosphorylated form competes with EIF4G1/EIF4G3 and strongly binds to EIF4E, leading to repression of translation. In contrast, the hyperphosphorylated form dissociates from EIF4E, allowing interaction between EIF4G1/EIF4G3 and EIF4E, leading to initiation of translation. Inhibits EIF4E-mediated mRNA nuclear export. The protein is Eukaryotic translation initiation factor 4E-binding protein 3 (EIF4EBP3) of Homo sapiens (Human).